A 275-amino-acid chain; its full sequence is Large ribosomal subunit protein uL2 (275 aa).

Residues 224-275 are disordered; the sequence is VMNPVDHPHGGGEGKSPIGRPSPVTPWGKPTLGYKTRKKNKASDKFIIKRRK. The span at 264–275 shows a compositional bias: basic and acidic residues; it reads KASDKFIIKRRK.

This sequence belongs to the universal ribosomal protein uL2 family. As to quaternary structure, part of the 50S ribosomal subunit. Forms a bridge to the 30S subunit in the 70S ribosome.

Its function is as follows. One of the primary rRNA binding proteins. Required for association of the 30S and 50S subunits to form the 70S ribosome, for tRNA binding and peptide bond formation. It has been suggested to have peptidyltransferase activity; this is somewhat controversial. Makes several contacts with the 16S rRNA in the 70S ribosome. The chain is Large ribosomal subunit protein uL2 from Acetivibrio thermocellus (strain ATCC 27405 / DSM 1237 / JCM 9322 / NBRC 103400 / NCIMB 10682 / NRRL B-4536 / VPI 7372) (Clostridium thermocellum).